An 85-amino-acid polypeptide reads, in one-letter code: Putative membrane protein insertion efficiency factor (85 aa).

This sequence belongs to the UPF0161 family.

Its subcellular location is the cell inner membrane. Could be involved in insertion of integral membrane proteins into the membrane. This Phenylobacterium zucineum (strain HLK1) protein is Putative membrane protein insertion efficiency factor.